A 273-amino-acid polypeptide reads, in one-letter code: Dermonecrotic toxin LapSicTox-alphaIB1aii (273 aa).

The active site involves His5. Mg(2+) contacts are provided by Glu25 and Asp27. The Nucleophile role is filled by His41. Intrachain disulfides connect Cys45-Cys51 and Cys47-Cys190. Asp85 serves as a coordination point for Mg(2+). Asn250 is a glycosylation site (N-linked (GlcNAc...) asparagine).

The protein belongs to the arthropod phospholipase D family. Class II subfamily. Requires Mg(2+) as cofactor. As to expression, expressed by the venom gland.

The protein resides in the secreted. It catalyses the reaction an N-(acyl)-sphingosylphosphocholine = an N-(acyl)-sphingosyl-1,3-cyclic phosphate + choline. The catalysed reaction is an N-(acyl)-sphingosylphosphoethanolamine = an N-(acyl)-sphingosyl-1,3-cyclic phosphate + ethanolamine. It carries out the reaction a 1-acyl-sn-glycero-3-phosphocholine = a 1-acyl-sn-glycero-2,3-cyclic phosphate + choline. The enzyme catalyses a 1-acyl-sn-glycero-3-phosphoethanolamine = a 1-acyl-sn-glycero-2,3-cyclic phosphate + ethanolamine. In terms of biological role, dermonecrotic toxins cleave the phosphodiester linkage between the phosphate and headgroup of certain phospholipids (sphingolipid and lysolipid substrates), forming an alcohol (often choline) and a cyclic phosphate. This toxin acts on sphingomyelin (SM). It may also act on ceramide phosphoethanolamine (CPE), lysophosphatidylcholine (LPC) and lysophosphatidylethanolamine (LPE), but not on lysophosphatidylserine (LPS), and lysophosphatidylglycerol (LPG). It acts by transphosphatidylation, releasing exclusively cyclic phosphate products as second products. Induces dermonecrosis, hemolysis, increased vascular permeability, edema, inflammatory response, and platelet aggregation. This is Dermonecrotic toxin LapSicTox-alphaIB1aii from Loxosceles apachea (Apache recluse spider).